Consider the following 427-residue polypeptide: Kallistatin (427 aa).

An N-terminal signal peptide occupies residues 1 to 20; that stretch reads MHLIDYLLLLLVGLLALSHG. Asparagine 33, asparagine 108, asparagine 157, and asparagine 238 each carry an N-linked (GlcNAc...) asparagine glycan.

The protein belongs to the serpin family. As to quaternary structure, monomer and some homodimers.

The protein resides in the secreted. Inhibits human amidolytic and kininogenase activities of tissue kallikrein. The sequence is that of Kallistatin (SERPINA4) from Pongo abelii (Sumatran orangutan).